The sequence spans 1217 residues: Rho family-interacting cell polarization regulator 1 (1217 aa).

At Ser-22 the chain carries Phosphoserine. The stretch at 83–112 (RGLTAYLEVHQQEQEKLQRQIKESKRNSRL) forms a coiled coil. Phosphoserine is present on residues Ser-345 and Ser-347. At Thr-351 the chain carries Phosphothreonine. Positions 371 to 413 (NGTAWSLSSESSDDSSSPQLSGTARYSSTPKPLVQQPEPLPVQ) are disordered. Low complexity-rich tracts occupy residues 376–391 (SLSSESSDDSSSPQLS) and 400–413 (PKPLVQQPEPLPVQ). Residues Ser-452 and Ser-455 each carry the phosphoserine modification. Residues 565 to 762 (TSTTVGSTHK…SPSSIVPEPQ (198 aa)) form a disordered region. Over residues 579 to 594 (PLTSTGSIPSVTDSIQ) the composition is skewed to polar residues. A compositionally biased stretch (low complexity) spans 595-649 (TTTSPTHTTPSPTHTTVSPTHSTPSPTHTTVSPSNAALSPSNATPSLSHSTTSPT). The span at 650-661 (QKATMSTHTTSA) shows a compositional bias: polar residues. Low complexity predominate over residues 664 to 695 (PVQTTTSPISTTVSPSPSVDTAIISSSSAVPS). A compositionally biased stretch (polar residues) spans 720–729 (ACTSSPSLAS). Ser-742 carries the phosphoserine modification. A coiled-coil region spans residues 786-828 (RRLEEALRTLMAALDDYRGQFPELQGLEQEVTRLESLLMQRQG). The tract at residues 850–874 (FLNDDEDEDNDSPGDRPTSSPEVVA) is disordered. A compositionally biased stretch (acidic residues) spans 852 to 861 (NDDEDEDNDS). Residues Ser-868 and Ser-869 each carry the phosphoserine modification.

It belongs to the RIPOR family. In terms of assembly, interacts (via N-terminus) with RHOA (GTP-bound form); this interaction links active RHOA to STK24 and STK26 kinases. Interacts with RHOB. Interacts with RHOC. Interacts (via C-terminus) with PDCD10; this interaction occurs in a Rho-independent manner. Interacts (via C-terminus) with STK24; this interaction occurs in a PDCD10-dependent and Rho-independent manner. Interacts (via C-terminus) with STK26; this interaction occurs in a PDCD10-dependent and Rho-independent manner. Interacts (via N-terminus) with 14-3-3 proteins; these interactions occur in a Rho-dependent manner.

It is found in the cytoplasm. The protein localises to the golgi apparatus. Its function is as follows. Downstream effector protein for Rho-type small GTPases that plays a role in cell polarity and directional migration. Acts as an adapter protein, linking active Rho proteins to STK24 and STK26 kinases, and hence positively regulates Golgi reorientation in polarized cell migration upon Rho activation. Involved in the subcellular relocation of STK26 from the Golgi to cytoplasm punctae in a Rho- and PDCD10-dependent manner upon serum stimulation. The sequence is that of Rho family-interacting cell polarization regulator 1 from Rattus norvegicus (Rat).